Consider the following 155-residue polypeptide: Catabolic 3-dehydroquinase (155 aa).

The active-site Proton acceptor is Y24. The substrate site is built by N75, H81, and D88. H101 functions as the Proton donor in the catalytic mechanism. Substrate-binding positions include 102-103 and R112; that span reads VS.

It belongs to the type-II 3-dehydroquinase family. Homododecamer. Adopts a ring-like structure, composed of an arrangement of two hexameric rings stacked on top of one another.

It catalyses the reaction 3-dehydroquinate = 3-dehydroshikimate + H2O. It functions in the pathway aromatic compound metabolism; 3,4-dihydroxybenzoate biosynthesis; 3,4-dihydroxybenzoate from 3-dehydroquinate: step 1/2. Is involved in the catabolism of quinate. Allows the utilization of quinate as carbon source via the beta-ketoadipate pathway. The polypeptide is Catabolic 3-dehydroquinase (Penicillium rubens (strain ATCC 28089 / DSM 1075 / NRRL 1951 / Wisconsin 54-1255) (Penicillium chrysogenum)).